The sequence spans 127 residues: Cliotide T3 (127 aa).

Residues 1–24 (MAYVRLTSLAVLFFLAASVMKTEG) form the signal peptide. Residues 25 to 53 (GLPTCGETCTLGTCYVPDCSCSWPICMKN) constitute a cross-link (cyclopeptide (Gly-Asn)). Intrachain disulfides connect cysteine 29–cysteine 43, cysteine 33–cysteine 45, and cysteine 38–cysteine 50. The propeptide at 54-127 (HIIAANAKTV…DLKMPLESTN (74 aa)) is removed in mature form.

Post-translationally, contains 3 disulfide bonds. In terms of processing, this is a cyclic peptide. As to expression, expressed in flower, stem, shoot, leaf and seed but not in root, pod and nodule (at protein level).

In terms of biological role, probably participates in a plant defense mechanism. Not active against Gram-negative bacteria E.coli ATCC 700926, K.pneumoniae ATTC 13883 and P.aeruginosa ATCC 39018 at concentration up to 100 uM. Has cytotoxic and hemolytic activity. The polypeptide is Cliotide T3 (Clitoria ternatea (Butterfly pea)).